The chain runs to 418 residues: Histidine--tRNA ligase (418 aa).

It belongs to the class-II aminoacyl-tRNA synthetase family. Homodimer.

It localises to the cytoplasm. It catalyses the reaction tRNA(His) + L-histidine + ATP = L-histidyl-tRNA(His) + AMP + diphosphate + H(+). The chain is Histidine--tRNA ligase from Thermosipho africanus (strain TCF52B).